We begin with the raw amino-acid sequence, 503 residues long: Probable cytosol aminopeptidase (503 aa).

2 residues coordinate Mn(2+): Lys271 and Asp276. Lys283 is a catalytic residue. Residues Asp294, Asp353, and Glu355 each coordinate Mn(2+). The active site involves Arg357.

This sequence belongs to the peptidase M17 family. Requires Mn(2+) as cofactor.

The protein resides in the cytoplasm. The enzyme catalyses Release of an N-terminal amino acid, Xaa-|-Yaa-, in which Xaa is preferably Leu, but may be other amino acids including Pro although not Arg or Lys, and Yaa may be Pro. Amino acid amides and methyl esters are also readily hydrolyzed, but rates on arylamides are exceedingly low.. It catalyses the reaction Release of an N-terminal amino acid, preferentially leucine, but not glutamic or aspartic acids.. Its function is as follows. Presumably involved in the processing and regular turnover of intracellular proteins. Catalyzes the removal of unsubstituted N-terminal amino acids from various peptides. This is Probable cytosol aminopeptidase from Chlorobium phaeobacteroides (strain DSM 266 / SMG 266 / 2430).